Here is a 158-residue protein sequence, read N- to C-terminus: NAD(P)H-quinone oxidoreductase subunit N (158 aa).

This sequence belongs to the complex I NdhN subunit family. As to quaternary structure, NDH-1 can be composed of about 15 different subunits; different subcomplexes with different compositions have been identified which probably have different functions.

The protein localises to the cellular thylakoid membrane. It carries out the reaction a plastoquinone + NADH + (n+1) H(+)(in) = a plastoquinol + NAD(+) + n H(+)(out). It catalyses the reaction a plastoquinone + NADPH + (n+1) H(+)(in) = a plastoquinol + NADP(+) + n H(+)(out). NDH-1 shuttles electrons from an unknown electron donor, via FMN and iron-sulfur (Fe-S) centers, to quinones in the respiratory and/or the photosynthetic chain. The immediate electron acceptor for the enzyme in this species is believed to be plastoquinone. Couples the redox reaction to proton translocation, and thus conserves the redox energy in a proton gradient. Cyanobacterial NDH-1 also plays a role in inorganic carbon-concentration. This is NAD(P)H-quinone oxidoreductase subunit N from Trichodesmium erythraeum (strain IMS101).